Reading from the N-terminus, the 379-residue chain is DNA-directed RNA polymerase subunit Rpo1C (379 aa).

This sequence belongs to the RNA polymerase beta' chain family. In terms of assembly, part of the RNA polymerase complex.

The protein localises to the cytoplasm. It catalyses the reaction RNA(n) + a ribonucleoside 5'-triphosphate = RNA(n+1) + diphosphate. Its function is as follows. DNA-dependent RNA polymerase (RNAP) catalyzes the transcription of DNA into RNA using the four ribonucleoside triphosphates as substrates. Forms part of the jaw domain. This Pyrobaculum aerophilum (strain ATCC 51768 / DSM 7523 / JCM 9630 / CIP 104966 / NBRC 100827 / IM2) protein is DNA-directed RNA polymerase subunit Rpo1C.